The primary structure comprises 195 residues: Protein Fer3 (195 aa).

2 disordered regions span residues 1–24 (MQHPHPIDQPTYMPDVPFQPLWGQ) and 56–82 (PLVPQRPSTNGRANGSSSSSKKTRRRV). A compositionally biased stretch (low complexity) spans 63 to 75 (STNGRANGSSSSS). In terms of domain architecture, bHLH spans 86–138 (AQRRAANIRERRRMFNLNEAFDKLRRKVPTFAYEKRLSRIETLRLAITYIGFM). Residues 145–175 (TPSNSHKSRSDVYGSMNGHHQAPPPAIHPHH) are disordered.

It localises to the nucleus. Functionally, transcription factor that binds to the E-box and functions as inhibitor of transcription. DNA binding requires dimerization with an E protein. Inhibits transcription activation by ASCL1/MASH1 by sequestering E proteins. In Drosophila melanogaster (Fruit fly), this protein is Protein Fer3 (fer3).